A 92-amino-acid chain; its full sequence is Large ribosomal subunit protein bL27 (92 aa).

Positions 1–26 (MAHKKGASSSSNGRDSESKRLGVKRF) are disordered.

It belongs to the bacterial ribosomal protein bL27 family.

This is Large ribosomal subunit protein bL27 from Corynebacterium aurimucosum (strain ATCC 700975 / DSM 44827 / CIP 107346 / CN-1) (Corynebacterium nigricans).